Here is a 261-residue protein sequence, read N- to C-terminus: Cytochrome c oxidase subunit 3 (261 aa).

Topologically, residues 1 to 15 (MTHQLHQYHLVDPSP) are mitochondrial matrix. A helical transmembrane segment spans residues 16-34 (WPLTGAMGSLLLASGLAVW). At 35-40 (FHTNNT) the chain is on the mitochondrial intermembrane side. A helical membrane pass occupies residues 41-66 (MLLKFGLLTLLLTMFQWWRDIIREST). At 67–72 (YQGHHT) the chain is on the mitochondrial matrix side. The chain crosses the membrane as a helical span at residues 73-105 (SGVQKNMRYGMILFITSEVFFFLGFFWALYHVS). The Mitochondrial intermembrane portion of the chain corresponds to 106–128 (LVPTPELGAEWPPIGITPLNPME). A helical transmembrane segment spans residues 129-152 (VPLLNTAVLLSSGATITWSHHTMM). Over 153-155 (KGN) the chain is Mitochondrial matrix. The helical transmembrane segment at 156–183 (KKEATHALMLTIILGAYFTALQLSEYME) threads the bilayer. Topologically, residues 184 to 190 (TPFTIAD) are mitochondrial intermembrane. The chain crosses the membrane as a helical span at residues 191 to 223 (SVYGSLFFVATGFHGLHVMIGTSFLMVCALRLA). Residues 224 to 232 (KHHFTITHH) lie on the Mitochondrial matrix side of the membrane. The helical transmembrane segment at 233-256 (FGYEAAIWYWHFVDIVWLFLYISV) threads the bilayer. At 257 to 261 (YWWGS) the chain is on the mitochondrial intermembrane side.

It belongs to the cytochrome c oxidase subunit 3 family. As to quaternary structure, component of the cytochrome c oxidase (complex IV, CIV), a multisubunit enzyme composed of 14 subunits. The complex is composed of a catalytic core of 3 subunits MT-CO1, MT-CO2 and MT-CO3, encoded in the mitochondrial DNA, and 11 supernumerary subunits COX4I, COX5A, COX5B, COX6A, COX6B, COX6C, COX7A, COX7B, COX7C, COX8 and NDUFA4, which are encoded in the nuclear genome. The complex exists as a monomer or a dimer and forms supercomplexes (SCs) in the inner mitochondrial membrane with NADH-ubiquinone oxidoreductase (complex I, CI) and ubiquinol-cytochrome c oxidoreductase (cytochrome b-c1 complex, complex III, CIII), resulting in different assemblies (supercomplex SCI(1)III(2)IV(1) and megacomplex MCI(2)III(2)IV(2)).

It localises to the mitochondrion inner membrane. It catalyses the reaction 4 Fe(II)-[cytochrome c] + O2 + 8 H(+)(in) = 4 Fe(III)-[cytochrome c] + 2 H2O + 4 H(+)(out). In terms of biological role, component of the cytochrome c oxidase, the last enzyme in the mitochondrial electron transport chain which drives oxidative phosphorylation. The respiratory chain contains 3 multisubunit complexes succinate dehydrogenase (complex II, CII), ubiquinol-cytochrome c oxidoreductase (cytochrome b-c1 complex, complex III, CIII) and cytochrome c oxidase (complex IV, CIV), that cooperate to transfer electrons derived from NADH and succinate to molecular oxygen, creating an electrochemical gradient over the inner membrane that drives transmembrane transport and the ATP synthase. Cytochrome c oxidase is the component of the respiratory chain that catalyzes the reduction of oxygen to water. Electrons originating from reduced cytochrome c in the intermembrane space (IMS) are transferred via the dinuclear copper A center (CU(A)) of subunit 2 and heme A of subunit 1 to the active site in subunit 1, a binuclear center (BNC) formed by heme A3 and copper B (CU(B)). The BNC reduces molecular oxygen to 2 water molecules using 4 electrons from cytochrome c in the IMS and 4 protons from the mitochondrial matrix. This chain is Cytochrome c oxidase subunit 3 (MT-CO3), found in Lycodon semicarinatus (Ryukyu odd-tooth snake).